We begin with the raw amino-acid sequence, 3258 residues long: Protein unc-80 homolog (3258 aa).

The disordered stretch occupies residues 152 to 173 (VENQGSPGQPCQSSSNDEEENN). Over residues 155-166 (QGSPGQPCQSSS) the composition is skewed to low complexity. Ser-257 carries the post-translational modification Phosphoserine. Disordered stretches follow at residues 291–316 (RGNSFDGSLSSQTSQERGPSHSRASL), 449–468 (RKEDRERKGSIPFHHTGKRR), 522–560 (RRGSSDAATEMESLSARHSHSHHTLVSDLPDPSNSHGEN), 697–717 (KKSENKENETLEKRPSEGAFQ), 732–784 (PAVS…TPVS), 963–1019 (PGKK…EQMQ), 1034–1076 (KSQS…ISLR), 1404–1447 (EDSK…MSNA), and 1817–1836 (AVSAEDEEHTTEHTPNHHVP). The segment covering 295-307 (FDGSLSSQTSQER) has biased composition (polar residues). Ser-525 carries the post-translational modification Phosphoserine. Residues 698-712 (KSENKENETLEKRPS) are compositionally biased toward basic and acidic residues. Over residues 732-767 (PAVSGAGDGGGEEGGGGDGGGGGGDGGGGGGGGGGP) the composition is skewed to gly residues. 2 stretches are compositionally biased toward basic and acidic residues: residues 769-780 (EKNDKNQEKDES) and 965-974 (KKVEENEQES). The segment covering 1035 to 1052 (SQSAASDTSSQSEQDTSE) has biased composition (low complexity). The span at 1066 to 1076 (ARSRSRRISLR) shows a compositional bias: basic residues. Residues 1417-1429 (LKSDAGVEEKKEG) are compositionally biased toward basic and acidic residues. The next 4 membrane-spanning stretches (helical) occupy residues 2268-2288 (PFVLQLFASVAPLLEFPDAAN), 2398-2418 (IAATAALATSLQALLYSVEVL), 2785-2805 (GLAESTSQAAYLALKVILVCF), and 2831-2851 (LALWDFLDFIVRTRIPIFVLL). Residues 2942 to 2964 (NTGTGTVWEQDSEPSQQASQDTL) are compositionally biased toward polar residues. Residues 2942-2982 (NTGTGTVWEQDSEPSQQASQDTLSRTDEEDEENDSISMPSV) form a disordered region. Phosphoserine is present on Ser-3042. The disordered stretch occupies residues 3051 to 3213 (NLLVQQPLGR…DDFTGLETSS (163 aa)). Over residues 3059–3068 (GRKRGLRQLR) the composition is skewed to basic residues. Over residues 3088 to 3100 (RLSTTRRSIQPKT) the composition is skewed to polar residues. Low complexity predominate over residues 3117-3129 (PEPAAAPTDALPA). Positions 3175–3186 (PTEEGEKEEDTE) are enriched in acidic residues.

It belongs to the unc-80 family. In terms of assembly, NALCN complex consists of NALCN and auxiliary subunits, UNC79, UNC80 and NACL1. These auxiliary subunits are essential for the NALCN complex function. Interacts (via N-terminus half) with NALCN; this interaction facilitates NALCN surface localization. Interacts with UNC79. UNC80 bridges NALCN to UNC79. Post-translationally, phosphorylated on tyrosine residues. In terms of tissue distribution, moderately expressed in fetal brain, spinal cord, skeletal muscle, thymus, spleen, fetal liver, small intestine, colon, kidney and uterus. Highly expressed in adrenal gland, prostate and testis, as well as in brain and cerebellum.

The protein localises to the cell membrane. In terms of biological role, auxiliary subunit of the NALCN sodium channel complex, a voltage-gated ion channel responsible for the resting Na(+) permeability that controls neuronal excitability. Activated by neuropeptides substance P, neurotensin, and extracellular Ca(2+) that regulates neuronal excitability by controlling the sizes of NALCN-dependent sodium-leak current. UNC80 is essential for NALCN sensitivity to extracellular Ca(2+). The protein is Protein unc-80 homolog of Homo sapiens (Human).